The sequence spans 128 residues: 14 kDa zinc-binding protein (128 aa).

The region spanning 18-128 (IFDKIIKKEI…GGRQMNWPPG (111 aa)) is the HIT domain. A Histidine triad motif motif is present at residues 112–116 (HIHVH).

Homodimer.

The sequence is that of 14 kDa zinc-binding protein (ZBP14) from Zea mays (Maize).